The following is a 351-amino-acid chain: Thiamine-phosphate synthase (351 aa).

The tract at residues 1–128 is unknown; the sequence is MKNPNIIQPE…SKIASEIRYE (128 aa). The tract at residues 129–351 is thiamine-phosphate synthase; the sequence is IYTLEIEILN…IIIKELSHEN (223 aa). 4-amino-2-methyl-5-(diphosphooxymethyl)pyrimidine is bound by residues 180–184 and asparagine 212; that span reads QHRFK. 2 residues coordinate Mg(2+): asparagine 213 and aspartate 232. Serine 251 provides a ligand contact to 4-amino-2-methyl-5-(diphosphooxymethyl)pyrimidine. A 2-[(2R,5Z)-2-carboxy-4-methylthiazol-5(2H)-ylidene]ethyl phosphate-binding site is contributed by 277–279; the sequence is TLT. Residue lysine 280 participates in 4-amino-2-methyl-5-(diphosphooxymethyl)pyrimidine binding. Residues glycine 307 and 327–328 each bind 2-[(2R,5Z)-2-carboxy-4-methylthiazol-5(2H)-ylidene]ethyl phosphate; that span reads VS.

It belongs to the thiamine-phosphate synthase family.

It carries out the reaction 2-[(2R,5Z)-2-carboxy-4-methylthiazol-5(2H)-ylidene]ethyl phosphate + 4-amino-2-methyl-5-(diphosphooxymethyl)pyrimidine + 2 H(+) = thiamine phosphate + CO2 + diphosphate. The catalysed reaction is 2-(2-carboxy-4-methylthiazol-5-yl)ethyl phosphate + 4-amino-2-methyl-5-(diphosphooxymethyl)pyrimidine + 2 H(+) = thiamine phosphate + CO2 + diphosphate. It catalyses the reaction 4-methyl-5-(2-phosphooxyethyl)-thiazole + 4-amino-2-methyl-5-(diphosphooxymethyl)pyrimidine + H(+) = thiamine phosphate + diphosphate. It functions in the pathway cofactor biosynthesis; thiamine diphosphate biosynthesis; thiamine phosphate from 4-amino-2-methyl-5-diphosphomethylpyrimidine and 4-methyl-5-(2-phosphoethyl)-thiazole: step 1/1. Functionally, condenses 4-methyl-5-(beta-hydroxyethyl)thiazole monophosphate (THZ-P) and 2-methyl-4-amino-5-hydroxymethyl pyrimidine pyrophosphate (HMP-PP) to form thiamine monophosphate (TMP). In Prochlorococcus marinus subsp. pastoris (strain CCMP1986 / NIES-2087 / MED4), this protein is Thiamine-phosphate synthase.